The following is a 749-amino-acid chain: Basic juvenile hormone-suppressible protein 2 (749 aa).

The N-terminal stretch at 1-14 (MRAVLLFVVSLAAL) is a signal peptide.

It belongs to the hemocyanin family. In terms of tissue distribution, fat body, and hemolymph of larvae.

This Trichoplusia ni (Cabbage looper) protein is Basic juvenile hormone-suppressible protein 2 (BJSP-2).